Consider the following 153-residue polypeptide: Small ribosomal subunit protein eS19 (153 aa).

Disordered stretches follow at residues 77 to 99 (YGTS…KGSG) and 113 to 139 (GYVE…TAGD). Basic and acidic residues predominate over residues 120–133 (NDGRRVTGDGRSLL).

The protein belongs to the eukaryotic ribosomal protein eS19 family. As to quaternary structure, part of the 30S ribosomal subunit.

In terms of biological role, may be involved in maturation of the 30S ribosomal subunit. The protein is Small ribosomal subunit protein eS19 of Haloarcula marismortui (strain ATCC 43049 / DSM 3752 / JCM 8966 / VKM B-1809) (Halobacterium marismortui).